Consider the following 262-residue polypeptide: Hydroxyethylthiazole kinase (262 aa).

Met39 contacts substrate. ATP-binding residues include Lys115 and Thr160. A substrate-binding site is contributed by Gly187.

Belongs to the Thz kinase family. The cofactor is Mg(2+).

It catalyses the reaction 5-(2-hydroxyethyl)-4-methylthiazole + ATP = 4-methyl-5-(2-phosphooxyethyl)-thiazole + ADP + H(+). It functions in the pathway cofactor biosynthesis; thiamine diphosphate biosynthesis; 4-methyl-5-(2-phosphoethyl)-thiazole from 5-(2-hydroxyethyl)-4-methylthiazole: step 1/1. In terms of biological role, catalyzes the phosphorylation of the hydroxyl group of 4-methyl-5-beta-hydroxyethylthiazole (THZ). This is Hydroxyethylthiazole kinase from Staphylococcus epidermidis (strain ATCC 12228 / FDA PCI 1200).